A 63-amino-acid polypeptide reads, in one-letter code: MAKSKNHTAHNQTRKAHRNGIKKPKTYKYPSLKGVDAKFKRNHRYALHGTAKALAKARAEKSA.

Basic residues predominate over residues 1–26 (MAKSKNHTAHNQTRKAHRNGIKKPKT). Positions 1–35 (MAKSKNHTAHNQTRKAHRNGIKKPKTYKYPSLKGV) are disordered.

Belongs to the eukaryotic ribosomal protein eL29 family. As to quaternary structure, component of the large ribosomal subunit. Mature ribosomes consist of a small (40S) and a large (60S) subunit. The 40S subunit contains about 32 different proteins and 1 molecule of RNA (18S). The 60S subunit contains 45 different proteins and 3 molecules of RNA (25S, 5.8S and 5S).

It is found in the cytoplasm. Functionally, component of the ribosome, a large ribonucleoprotein complex responsible for the synthesis of proteins in the cell. The small ribosomal subunit (SSU) binds messenger RNAs (mRNAs) and translates the encoded message by selecting cognate aminoacyl-transfer RNA (tRNA) molecules. The large subunit (LSU) contains the ribosomal catalytic site termed the peptidyl transferase center (PTC), which catalyzes the formation of peptide bonds, thereby polymerizing the amino acids delivered by tRNAs into a polypeptide chain. The nascent polypeptides leave the ribosome through a tunnel in the LSU and interact with protein factors that function in enzymatic processing, targeting, and the membrane insertion of nascent chains at the exit of the ribosomal tunnel. In Candida albicans (strain SC5314 / ATCC MYA-2876) (Yeast), this protein is Large ribosomal subunit protein eL29.